A 115-amino-acid polypeptide reads, in one-letter code: NADH-ubiquinone oxidoreductase chain 3 (115 aa).

3 helical membrane-spanning segments follow: residues Leu4–Leu24, Phe55–Leu75, and Ile84–Tyr104.

Belongs to the complex I subunit 3 family. As to quaternary structure, core subunit of respiratory chain NADH dehydrogenase (Complex I) which is composed of 45 different subunits. Interacts with TMEM186. Interacts with TMEM242.

The protein localises to the mitochondrion inner membrane. It catalyses the reaction a ubiquinone + NADH + 5 H(+)(in) = a ubiquinol + NAD(+) + 4 H(+)(out). In terms of biological role, core subunit of the mitochondrial membrane respiratory chain NADH dehydrogenase (Complex I) which catalyzes electron transfer from NADH through the respiratory chain, using ubiquinone as an electron acceptor. Essential for the catalytic activity of complex I. The polypeptide is NADH-ubiquinone oxidoreductase chain 3 (Peromyscus melanotis (Black-eared mouse)).